The chain runs to 410 residues: Platelet-activating factor acetylhydrolase IB subunit beta (410 aa).

The tract at residues 1-38 is required for self-association and interaction with PAFAH1B2 and PAFAH1B3; it reads MVLSQRQRDELNRAIADYLRSNGYEEAYSVFKKEAELD. The interaction with NDE1 stretch occupies residues 1–66; that stretch reads MVLSQRQRDE…SVIRLQKKVM (66 aa). The tract at residues 1–102 is interaction with NDEL1; sequence MVLSQRQRDE…EWIPRPPEKY (102 aa). Positions 7 to 39 constitute a LisH domain; the sequence is QRDELNRAIADYLRSNGYEEAYSVFKKEAELDM. Lys53 carries the post-translational modification N6-acetyllysine. Residues 56–82 adopt a coiled-coil conformation; it reads TSVIRLQKKVMELESKLNEAKEEFTSG. An interaction with dynein and dynactin region spans residues 83 to 410; that stretch reads GPLGQKRDPK…DQTVKVWECR (328 aa). WD repeat units lie at residues 106-147, 148-187, 190-229, 232-271, 274-333, 336-377, and 378-410; these read GHRS…RTLK, GHTD…CIRT, GHDH…CVKT, GHRE…CKAE, EHEH…CLMT, GHDN…KTLN, and AHEH…WECR. At Ser109 the chain carries Phosphoserine. The tract at residues 367 to 409 is interaction with DCX; the sequence is YKNKRCMKTLNAHEHFVTSLDFHKTAPYVVTGSVDQTVKVWEC. Residues 388–410 are interaction with NDEL1; sequence FHKTAPYVVTGSVDQTVKVWECR.

Belongs to the WD repeat LIS1/nudF family. In terms of assembly, can self-associate. Component of the cytosolic PAF-AH (I) heterotetrameric enzyme, which is composed of PAFAH1B1 (beta), PAFAH1B2 (alpha2) and PAFAH1B3 (alpha1) subunits. The catalytic activity of the enzyme resides in the alpha1 (PAFAH1B3) and alpha2 (PAFAH1B2) subunits, whereas the beta subunit (PAFAH1B1) has regulatory activity. Trimer formation is not essential for the catalytic activity. Interacts with the catalytic dimer of PAF-AH (I) heterotetrameric enzyme: interacts with PAFAH1B2 homodimer (alpha2/alpha2 homodimer), PAFAH1B3 homodimer (alpha1/alpha1 homodimer) and PAFAH1B2-PAFAH1B3 heterodimer (alpha2/alpha1 heterodimer). Interacts with DCX, dynein, dynactin, IQGAP1, KATNB1, NDE1, NDEL1, NUDC and RSN. Interacts with DISC1, and this interaction is enhanced by NDEL1. Interacts with DAB1 when DAB1 is phosphorylated in response to RELN/reelin signaling. Interacts with INTS13. Interacts with DCDC1.

Its subcellular location is the cytoplasm. It localises to the cytoskeleton. It is found in the microtubule organizing center. The protein localises to the centrosome. The protein resides in the spindle. Its subcellular location is the nucleus membrane. Its function is as follows. Regulatory subunit (beta subunit) of the cytosolic type I platelet-activating factor (PAF) acetylhydrolase (PAF-AH (I)), an enzyme that catalyzes the hydrolyze of the acetyl group at the sn-2 position of PAF and its analogs and participates in PAF inactivation. Regulates the PAF-AH (I) activity in a catalytic dimer composition-dependent manner. Positively regulates the activity of the minus-end directed microtubule motor protein dynein. May enhance dynein-mediated microtubule sliding by targeting dynein to the microtubule plus end. Required for several dynein- and microtubule-dependent processes such as the maintenance of Golgi integrity, the peripheral transport of microtubule fragments and the coupling of the nucleus and centrosome. Required during brain development for the proliferation of neuronal precursors and the migration of newly formed neurons from the ventricular/subventricular zone toward the cortical plate. Neuronal migration involves a process called nucleokinesis, whereby migrating cells extend an anterior process into which the nucleus subsequently translocates. During nucleokinesis dynein at the nuclear surface may translocate the nucleus towards the centrosome by exerting force on centrosomal microtubules. Also required for proper activation of Rho GTPases and actin polymerization at the leading edge of locomoting cerebellar neurons and postmigratory hippocampal neurons in response to calcium influx triggered via NMDA receptors. May also play a role in other forms of cell locomotion including the migration of fibroblasts during wound healing. Required for dynein recruitment to microtubule plus ends and BICD2-bound cargos. May modulate the Reelin pathway through interaction of the PAF-AH (I) catalytic dimer with VLDLR. This chain is Platelet-activating factor acetylhydrolase IB subunit beta, found in Felis catus (Cat).